A 588-amino-acid chain; its full sequence is Adenine deaminase (588 aa).

The protein belongs to the metallo-dependent hydrolases superfamily. Adenine deaminase family. In terms of assembly, homodimer. Mn(2+) serves as cofactor.

It catalyses the reaction adenine + H2O + H(+) = hypoxanthine + NH4(+). The protein is Adenine deaminase of Shigella sonnei (strain Ss046).